Here is a 129-residue protein sequence, read N- to C-terminus: Glycine cleavage system H protein (129 aa).

The region spanning 24-106 is the Lipoyl-binding domain; sequence SYTVGITEHA…YGEGWFFRVM (83 aa). Lysine 65 carries the post-translational modification N6-lipoyllysine.

The protein belongs to the GcvH family. As to quaternary structure, the glycine cleavage system is composed of four proteins: P, T, L and H. (R)-lipoate serves as cofactor.

In terms of biological role, the glycine cleavage system catalyzes the degradation of glycine. The H protein shuttles the methylamine group of glycine from the P protein to the T protein. This chain is Glycine cleavage system H protein, found in Shewanella oneidensis (strain ATCC 700550 / JCM 31522 / CIP 106686 / LMG 19005 / NCIMB 14063 / MR-1).